Here is a 2907-residue protein sequence, read N- to C-terminus: Fibrillin-2 (2907 aa).

Residues 1 to 28 (MGRRRRLCLQPYFVWLGCVALWAQGTDG) form the signal peptide. Residues 26 to 58 (TDGQPQPPPPKTLRPQPPPQQVRPAVAGSEGGF) are disordered. Positions 29 to 77 (QPQPPPPKTLRPQPPPQQVRPAVAGSEGGFMGPEYRDEGAVAASRVRRR) are excised as a propeptide. The span at 30-46 (PQPPPPKTLRPQPPPQQ) shows a compositional bias: pro residues. EGF-like domains lie at 111 to 142 (IVPI…PTCG), 145 to 176 (SIQQ…TYCG), and 176 to 208 (GQPV…PQCE). Disulfide bonds link Cys115–Cys124, Cys119–Cys130, Cys132–Cys141, Cys149–Cys159, Cys153–Cys164, Cys166–Cys175, Cys180–Cys190, Cys184–Cys196, and Cys198–Cys207. The interaction with MFAP4 stretch occupies residues 149-359 (CSVRCMNGGT…VTSTDGSRCI (211 aa)). A TB 1 domain is found at 214–266 (GPCFTQVNNQMCQGQLTGIVCTKTLCCATIGRAWGHPCEMCPAQPQPCRRGFI). Residues 276-317 (DVDECQAIPGLCQGGNCINTVGSFECRCPAGHKQSETTQKCE) enclose the EGF-like 4; calcium-binding domain. Intrachain disulfides connect Cys280–Cys292, Cys287–Cys301, Cys303–Cys316, Cys322–Cys334, Cys329–Cys343, and Cys345–Cys358. Ser298 carries an O-linked (Glc) serine glycan. The 42-residue stretch at 318 to 359 (DIDECSVIPGVCETGDCSNTVGSYFCLCPRGFVTSTDGSRCI) folds into the EGF-like 5; calcium-binding domain. An O-linked (Glc) serine glycan is attached at Ser340. The region spanning 364–417 (GTCFSGLVNGRCAQELPGRMAKAQCCCEPGRCWSIGTIPEACPVRGSEEYRRLC) is the TB 2 domain. Residue Asn485 is glycosylated (N-linked (GlcNAc...) asparagine). The 41-residue stretch at 487–527 (TIDICKHHANLCLNGRCIPTVSSYRCECNMGYKQDANGDCI) folds into the EGF-like 6 domain. Cystine bridges form between Cys491/Cys503, Cys498/Cys512, Cys514/Cys526, Cys532/Cys542, Cys537/Cys551, Cys553/Cys566, Cys572/Cys584, Cys579/Cys593, Cys595/Cys608, Cys614/Cys625, Cys620/Cys634, Cys636/Cys649, Cys655/Cys666, Cys661/Cys675, and Cys677/Cys690. Ser509 is a glycosylation site (O-linked (Glc) serine). The region spanning 528 to 567 (DVDECTSNPCSNGDCVNTPGSYYCKCHAGFQRTPTKQACI) is the EGF-like 7; calcium-binding domain. Residue Ser548 is glycosylated (O-linked (Glc) serine). In terms of domain architecture, EGF-like 8; calcium-binding spans 568-609 (DIDECIQNGVLCKNGRCVNTDGSFQCICNAGFELTTDGKNCV). Ser590 is a glycosylation site (O-linked (Glc) serine). Positions 610–650 (DHDECTTTNMCLNGMCINEDGSFKCVCKPGFILAPNGRYCT) constitute an EGF-like 9; calcium-binding domain. An O-linked (Glc) serine glycan is attached at Ser631. An EGF-like 10; calcium-binding domain is found at 651-691 (DVDECQTPGICMNGHCINNEGSFRCDCPPGLAVGVDGRVCV). Residue Ser672 is glycosylated (O-linked (Glc) serine). The TB 3 domain occupies 697–749 (STCYGEIKKGVCVRPFPGAVTKSECCCANPDYGFGEPCQPCPAKNSAEFHGLC). The 42-residue stretch at 761–802 (DINECALDPDICANGICENLRGSYRCNCNSGYEPDASGRNCI) folds into the EGF-like 11; calcium-binding domain. 9 cysteine pairs are disulfide-bonded: Cys765/Cys777, Cys772/Cys786, Cys788/Cys801, Cys807/Cys819, Cys814/Cys828, Cys830/Cys843, Cys849/Cys859, Cys854/Cys868, and Cys870/Cys883. Residues 803 to 844 (DIDECLVNRLLCDNGLCRNTPGSYSCTCPPGYVFRTETETCE) form the EGF-like 12; calcium-binding domain. O-linked (Glc) serine glycosylation occurs at Ser825. The EGF-like 13; calcium-binding domain occupies 845-883 (DVNECESNPCVNGACRNNLGSFHCECSPGSKLSSTGLIC). O-linked (Glc) serine glycosylation is present at Ser865. A TB 4 domain is found at 889–940 (GTCWLNIQDNRCEVNINGATLKSECCATLGAAWGSPCERCELDAACPRGFAR). Residues 948 to 989 (DVNECEVFPGVCPNGRCVNSKGSFHCECPEGLTLDGTGRVCL) enclose the EGF-like 14; calcium-binding domain. 3 cysteine pairs are disulfide-bonded: Cys952–Cys964, Cys959–Cys973, and Cys975–Cys988. Ser970 is a glycosylation site (O-linked (Glc) serine). A TB 5 domain is found at 994–1045 (EHCFLKWDEDECIHPVPGKFRMDACCCAVGAAWGTECEECPKPGTKEYETLC). An EGF-like 15; calcium-binding domain is found at 1066–1107 (DINECKAFPGMCTYGKCRNTIGSFKCRCNNGFALDMEERNCT). 36 disulfide bridges follow: Cys1070–Cys1082, Cys1077–Cys1091, Cys1093–Cys1106, Cys1112–Cys1124, Cys1119–Cys1133, Cys1135–Cys1149, Cys1155–Cys1167, Cys1162–Cys1176, Cys1178–Cys1191, Cys1197–Cys1209, Cys1204–Cys1218, Cys1220–Cys1233, Cys1239–Cys1250, Cys1246–Cys1259, Cys1261–Cys1274, Cys1280–Cys1292, Cys1287–Cys1301, Cys1303–Cys1316, Cys1322–Cys1334, Cys1329–Cys1343, Cys1345–Cys1358, Cys1364–Cys1377, Cys1371–Cys1386, Cys1388–Cys1399, Cys1405–Cys1418, Cys1412–Cys1427, Cys1429–Cys1440, Cys1446–Cys1458, Cys1453–Cys1467, Cys1469–Cys1482, Cys1488–Cys1499, Cys1494–Cys1508, Cys1510–Cys1523, Cys1529–Cys1540, Cys1535–Cys1549, and Cys1551–Cys1564. Residue Ser1088 is glycosylated (O-linked (Glc) serine). Asn1105 is a glycosylation site (N-linked (GlcNAc...) asparagine). In terms of domain architecture, EGF-like 16; calcium-binding spans 1108–1150 (DIDECRISPDLCGSGICVNTPGSFECECFEGYESGFMMMKNCM). The region spanning 1151-1192 (DIDECERNPLLCRGGTCVNTEGSFQCDCPLGHELSPSREDCV) is the EGF-like 17; calcium-binding domain. Residue Ser1173 is glycosylated (O-linked (Glc) serine). The region spanning 1193-1234 (DINECSLSDNLCRNGKCVNMIGTYQCSCNPGYQATPDRQGCT) is the EGF-like 18; calcium-binding domain. O-linked (Glc) threonine glycosylation is present at Thr1215. Residues 1235–1275 (DIDECMIMNGGCDTQCTNSEGSYECSCSEGYALMPDGRSCA) enclose the EGF-like 19; calcium-binding domain. An O-linked (Glc) serine glycan is attached at Ser1256. Residues 1276-1317 (DIDECENNPDICDGGQCTNIPGEYRCLCYDGFMASMDMKTCI) enclose the EGF-like 20; calcium-binding domain. In terms of domain architecture, EGF-like 21; calcium-binding spans 1318 to 1359 (DVNECDLNPNICMFGECENTKGSFICHCQLGYSVKKGTTGCT). A glycan (O-linked (Glc) serine) is linked at Ser1340. Residues 1360 to 1400 (DVDECEIGAHNCDMHASCLNVPGSFKCSCREGWVGNGIKCI) form the EGF-like 22; calcium-binding domain. Ser1383 is a glycosylation site (O-linked (Glc) serine). Residues 1401–1441 (DLDECANGTHQCSINAQCVNTPGSYRCACSEGFTGDGFTCS) form the EGF-like 23; calcium-binding domain. The N-linked (GlcNAc...) asparagine glycan is linked to Asn1407. The region spanning 1442–1483 (DVDECAENTNLCENGQCLNVPGAYRCECEMGFTPASDSRSCQ) is the EGF-like 24; calcium-binding domain. The 41-residue stretch at 1484–1524 (DIDECSFQNICVFGTCNNLPGMFHCICDDGYELDRTGGNCT) folds into the EGF-like 25; calcium-binding domain. Asn1522 carries an N-linked (GlcNAc...) asparagine glycan. The EGF-like 26; calcium-binding domain occupies 1525-1565 (DIDECADPINCVNGLCVNTPGRYECNCPPDFQLNPTGVGCV). In terms of domain architecture, TB 6 spans 1570 to 1626 (GNCYLKFGPRGDGSLSCNTEVGVGVSRSSCCCSLGKAWGNPCETCPPVNSTEYYTLC). A glycan (N-linked (GlcNAc...) asparagine) is linked at Asn1618. The EGF-like 27; calcium-binding domain occupies 1643-1684 (DIDECQELPGLCQGGNCINTFGSFQCECPQGYYLSEETRICE). 6 disulfides stabilise this stretch: Cys1647–Cys1659, Cys1654–Cys1668, Cys1670–Cys1683, Cys1689–Cys1701, Cys1696–Cys1710, and Cys1712–Cys1725. An O-linked (Glc) serine glycan is attached at Ser1665. Positions 1685–1726 (DIDECFAHPGVCGPGTCYNTLGNYTCICPPEYMQVNGGHNCM) constitute an EGF-like 28; calcium-binding domain. Residue Asn1707 is glycosylated (N-linked (GlcNAc...) asparagine). Positions 1728–2164 (MRKSFCYRSY…VPSLHDTRED (437 aa)) are interaction with MFAP4. Positions 1731-1784 (SFCYRSYNGTTCENELPFNVTKRMCCCTYNVGKAWNKPCEPCPTPGTADFKTIC) constitute a TB 7 domain. Residues Asn1738 and Asn1749 are each glycosylated (N-linked (GlcNAc...) asparagine). An EGF-like 29; calcium-binding domain is found at 1801 to 1842 (DIDECKEIPGICANGVCINQIGSFRCECPTGFSYNDLLLVCE). Disulfide bonds link Cys1805–Cys1817, Cys1812–Cys1826, Cys1828–Cys1841, Cys1847–Cys1860, Cys1854–Cys1869, Cys1871–Cys1883, Cys1889–Cys1901, Cys1896–Cys1910, Cys1912–Cys1925, Cys1931–Cys1941, Cys1936–Cys1950, Cys1952–Cys1964, Cys1970–Cys1983, Cys1978–Cys1992, Cys1994–Cys2007, Cys2013–Cys2025, Cys2020–Cys2034, Cys2036–Cys2047, Cys2053–Cys2065, Cys2060–Cys2074, and Cys2076–Cys2089. Residues 1843–1884 (DIDECSNGDNLCQRNADCINSPGSYRCECAAGFKLSPNGACV) form the EGF-like 30; calcium-binding domain. A glycan (O-linked (Glc) serine) is linked at Ser1866. Residues 1885 to 1926 (DRNECLEIPNVCSHGLCVDLQGSYQCICNNGFKASQDQTMCM) form the EGF-like 31; calcium-binding domain. Residues 1927 to 1965 (DVDECERHPCGNGTCKNTVGSYNCLCYPGFELTHNNDCL) form the EGF-like 32; calcium-binding domain. Asn1938 carries N-linked (GlcNAc...) asparagine glycosylation. Residue Ser1947 is glycosylated (O-linked (Glc) serine). The EGF-like 33; calcium-binding domain maps to 1966–2008 (DIDECSSFFGQVCRNGRCFNEIGSFKCLCNEGYELTPDGKNCI). The O-linked (Glc) serine glycan is linked to Ser1989. Residues 2009–2048 (DTNECVALPGSCSPGTCQNLEGSFRCICPPGYEVRSENCI) form the EGF-like 34; calcium-binding domain. The EGF-like 35; calcium-binding domain maps to 2049 to 2090 (DINECDEDPNICLFGSCTNTPGGFQCICPPGFVLSDNGRRCF). The 54-residue stretch at 2095-2148 (SFCFTNFENGKCSVPKAFNTTKAKCCCSKMPGEGWGDPCELCPKDDEVAFQDLC) folds into the TB 8 domain. Asn2113 carries N-linked (GlcNAc...) asparagine glycosylation. The region spanning 2164-2205 (DVNECLESPGICSNGQCINTDGSFRCECPMGYNLDYTGVRCV) is the EGF-like 36; calcium-binding domain. Disulfide bonds link Cys2168/Cys2180, Cys2175/Cys2189, Cys2191/Cys2204, Cys2210/Cys2221, Cys2216/Cys2230, Cys2232/Cys2244, Cys2250/Cys2261, Cys2257/Cys2270, Cys2272/Cys2285, Cys2291/Cys2305, Cys2298/Cys2314, Cys2316/Cys2329, Cys2335/Cys2347, Cys2342/Cys2356, and Cys2358/Cys2371. A glycan (O-linked (Glc) serine) is linked at Ser2186. Residues 2206-2245 (DTDECSIGNPCGNGTCTNVIGSFECTCNEGFEPGPMMNCE) enclose the EGF-like 37; calcium-binding domain. A glycan (N-linked (GlcNAc...) asparagine) is linked at Asn2218. The 41-residue stretch at 2246-2286 (DINECAQNPLLCAFRCMNTFGSYECTCPVGYALREDQKMCK) folds into the EGF-like 38; calcium-binding domain. Ser2267 carries O-linked (Glc) serine glycosylation. Residues 2287–2330 (DLDECAEGLHDCESRGMMCKNLIGTFMCICPPGMARRPDGEGCV) enclose the EGF-like 39; calcium-binding domain. One can recognise an EGF-like 40; calcium-binding domain in the interval 2331 to 2372 (DENECRTKPGICENGRCVNIIGSYRCECNEGFQSSSSGTECL). A glycan (O-linked (Glc) serine) is linked at Ser2353. The TB 9 domain occupies 2377-2430 (GLCFAEVLQTMCQMASSSRNLVTKSECCCDGGRGWGHQCELCPLPGTAQYKKIC). Residues 2442–2483 (DIDECKVMPSLCTNGQCVNTMGSFRCFCKVGYTTDISGTACV) enclose the EGF-like 41; calcium-binding domain. Intrachain disulfides connect Cys2446-Cys2458, Cys2453-Cys2467, Cys2469-Cys2482, Cys2488-Cys2499, Cys2495-Cys2508, Cys2510-Cys2523, Cys2529-Cys2540, Cys2536-Cys2549, Cys2551-Cys2562, Cys2568-Cys2581, Cys2575-Cys2590, Cys2592-Cys2605, Cys2611-Cys2621, Cys2617-Cys2630, Cys2632-Cys2645, Cys2651-Cys2662, Cys2657-Cys2671, Cys2673-Cys2686, Cys2692-Cys2703, Cys2699-Cys2712, and Cys2714-Cys2726. Ser2464 carries O-linked (Glc) serine glycosylation. An EGF-like 42; calcium-binding domain is found at 2484–2524 (DLDECSQSPKPCNFICKNTKGSYQCSCPRGYVLQEDGKTCK). Residue Ser2505 is glycosylated (O-linked (Glc) serine). Residues 2525–2563 (DLDECQTKQHNCQFLCVNTLGGFTCKCPPGFTQHHTACI) form the EGF-like 43; calcium-binding domain. Residues 2564 to 2606 (DNNECGSQPSLCGAKGICQNTPGSFSCECQRGFSLDASGLNCE) form the EGF-like 44; calcium-binding domain. Ser2587 carries an O-linked (Glc) serine glycan. The 40-residue stretch at 2607-2646 (DVDECDGNHRCQHGCQNILGGYRCGCPQGYVQHYQWNQCV) folds into the EGF-like 45; calcium-binding domain. Residues 2647–2687 (DENECSNPGACGSASCYNTLGSYKCACPSGFSFDQFSSACH) enclose the EGF-like 46; calcium-binding domain. Ser2668 carries an O-linked (Glc) serine glycan. Positions 2688–2727 (DVNECSSSKNPCSYGCSNTEGGYLCGCPPGYFRVGQGHCV) constitute an EGF-like 47; calcium-binding domain. Asn2803 carries N-linked (GlcNAc...) asparagine glycosylation.

It belongs to the fibrillin family. As to quaternary structure, interacts with BMP2, BMP4, BMP7, BMP10 and GDF5. Interacts with MFAP2 and MFAP5. Interacts with ADAMTSL5. Interacts with MFAP4. Post-translationally, N-glycosylated. In terms of processing, O-glycosylated on serine residues by POGLUT2 and POGLUT3. In terms of tissue distribution, widely expressed.

The protein localises to the secreted. It localises to the extracellular space. The protein resides in the extracellular matrix. Fibrillins are structural components of 10-12 nm extracellular calcium-binding microfibrils, which occur either in association with elastin or in elastin-free bundles. Fibrillin-2-containing microfibrils regulate the early process of elastic fiber assembly. Regulates osteoblast maturation by controlling TGF-beta bioavailability and calibrating TGF-beta and BMP levels, respectively. Its function is as follows. Hormone secreted by trophoblasts that promotes trophoblast invasiveness. Has glucogenic activity: is able to increase plasma glucose levels. This chain is Fibrillin-2, found in Mus musculus (Mouse).